We begin with the raw amino-acid sequence, 340 residues long: Ketol-acid reductoisomerase (NADP(+)) (340 aa).

Positions 3–183 constitute a KARI N-terminal Rossmann domain; that stretch reads INVFYDKDCN…GGGRTGIIET (181 aa). NADP(+) contacts are provided by residues 26–29, arginine 49, serine 54, and 84–87; these read FGSQ and DENQ. Histidine 109 is an active-site residue. Residue glycine 135 participates in NADP(+) binding. Residues 184–329 enclose the KARI C-terminal knotted domain; it reads TFKDETETDL…VKLRNMMPWI (146 aa). Residues aspartate 192, glutamate 196, glutamate 228, and glutamate 232 each coordinate Mg(2+). Serine 253 lines the substrate pocket.

This sequence belongs to the ketol-acid reductoisomerase family. Mg(2+) serves as cofactor.

The enzyme catalyses (2R)-2,3-dihydroxy-3-methylbutanoate + NADP(+) = (2S)-2-acetolactate + NADPH + H(+). It carries out the reaction (2R,3R)-2,3-dihydroxy-3-methylpentanoate + NADP(+) = (S)-2-ethyl-2-hydroxy-3-oxobutanoate + NADPH + H(+). The protein operates within amino-acid biosynthesis; L-isoleucine biosynthesis; L-isoleucine from 2-oxobutanoate: step 2/4. It participates in amino-acid biosynthesis; L-valine biosynthesis; L-valine from pyruvate: step 2/4. Its function is as follows. Involved in the biosynthesis of branched-chain amino acids (BCAA). Catalyzes an alkyl-migration followed by a ketol-acid reduction of (S)-2-acetolactate (S2AL) to yield (R)-2,3-dihydroxy-isovalerate. In the isomerase reaction, S2AL is rearranged via a Mg-dependent methyl migration to produce 3-hydroxy-3-methyl-2-ketobutyrate (HMKB). In the reductase reaction, this 2-ketoacid undergoes a metal-dependent reduction by NADPH to yield (R)-2,3-dihydroxy-isovalerate. The polypeptide is Ketol-acid reductoisomerase (NADP(+)) (Aliarcobacter butzleri (strain RM4018) (Arcobacter butzleri)).